We begin with the raw amino-acid sequence, 218 residues long: MANSSPVYDWFQERLEIQDIADDVTSKYVPPHVNIFYCLGGITLVCFLIQFATGFAMTFYYKPTVTEAYNSVSYLMTDVSFGWLIRSVHRWSASMMVLMLILHVFRVYLTGGFKRPRELTWVTGVVMAVITVAFGVTGYSLPWDQVGYWAVKIVSGVPAAIPVVGDFMVELLRGGESVGQTTLTRFYSLHTFVLPWTLAIFMLMHFLMIRKQGISGPL.

The helical transmembrane segment at 35-55 (IFYCLGGITLVCFLIQFATGF) threads the bilayer. Cys38 is a heme c binding site. Positions 89 and 103 each coordinate heme b. Helical transmembrane passes span 93-113 (ASMM…TGGF), 119-139 (LTWV…VTGY), and 189-209 (LHTF…FLMI). Heme b-binding residues include His190 and His205.

The protein belongs to the cytochrome b family. PetB subfamily. As to quaternary structure, the 4 large subunits of the cytochrome b6-f complex are cytochrome b6, subunit IV (17 kDa polypeptide, PetD), cytochrome f and the Rieske protein, while the 4 small subunits are PetG, PetL, PetM and PetN. The complex functions as a dimer. The cofactor is heme b. Requires heme c as cofactor.

It is found in the cellular thylakoid membrane. Functionally, component of the cytochrome b6-f complex, which mediates electron transfer between photosystem II (PSII) and photosystem I (PSI), cyclic electron flow around PSI, and state transitions. The polypeptide is Cytochrome b6 (Prochlorococcus marinus (strain SARG / CCMP1375 / SS120)).